Here is a 415-residue protein sequence, read N- to C-terminus: Multidrug resistance protein MdtA (415 aa).

A signal peptide spans 1-21 (MKGSYKSRWVIVIVVVIAAIA). 2 disordered regions span residues 32–56 (SRSA…GMRA) and 392–415 (EAQS…GARS). Over residues 399-415 (SEEKATSREYAKKGARS) the composition is skewed to basic and acidic residues.

It belongs to the membrane fusion protein (MFP) (TC 8.A.1) family. Part of a tripartite efflux system composed of MdtA, MdtB and MdtC.

It localises to the cell inner membrane. In terms of biological role, the MdtABC tripartite complex confers resistance against novobiocin and deoxycholate. The polypeptide is Multidrug resistance protein MdtA (Escherichia coli O7:K1 (strain IAI39 / ExPEC)).